We begin with the raw amino-acid sequence, 419 residues long: Serine hydroxymethyltransferase (419 aa).

(6S)-5,6,7,8-tetrahydrofolate is bound by residues L118 and 122–124 (GHL). K226 carries the N6-(pyridoxal phosphate)lysine modification. E242 lines the (6S)-5,6,7,8-tetrahydrofolate pocket.

The protein belongs to the SHMT family. As to quaternary structure, homodimer. The cofactor is pyridoxal 5'-phosphate.

It localises to the cytoplasm. The enzyme catalyses (6R)-5,10-methylene-5,6,7,8-tetrahydrofolate + glycine + H2O = (6S)-5,6,7,8-tetrahydrofolate + L-serine. It functions in the pathway one-carbon metabolism; tetrahydrofolate interconversion. Its pathway is amino-acid biosynthesis; glycine biosynthesis; glycine from L-serine: step 1/1. Functionally, catalyzes the reversible interconversion of serine and glycine with tetrahydrofolate (THF) serving as the one-carbon carrier. This reaction serves as the major source of one-carbon groups required for the biosynthesis of purines, thymidylate, methionine, and other important biomolecules. Also exhibits THF-independent aldolase activity toward beta-hydroxyamino acids, producing glycine and aldehydes, via a retro-aldol mechanism. The protein is Serine hydroxymethyltransferase of Metamycoplasma arthritidis (strain 158L3-1) (Mycoplasma arthritidis).